We begin with the raw amino-acid sequence, 464 residues long: MRAARRGLHCAGAERPRRRGRLWDSSGVPQRQKRPGPWRTQTQEQMSRDVCIHTWPCTYYLEPKRRWVTGQLSLTSLSLRFMTDSTGEILVSFPLSSIVEIKKEASHFIFSSITILEKGHAKHWFSSLRPSRNVVFSIIEHFWRELLLSQPGAVADASVPRTRGEELTGLMAGSQKRLEDTARVLHHQGQQLDSVMRGLDKMESDLEVADRLLTELESPAWWPFSSKLWKTPPETKPREDVSMTSCEPFGKEGILIKIPAVISHRTESHVKPGRLTVLVSGLEIHDSSSLLMHRFEREDVDDIKVHSPYEISIRQRFIGKPDMAYRLISAKMPEVIPILEVQFSKKMELLEDALVLRSARTSSPAEKSCSVWHAASGLMGRTLHREPPAGDQEGTALHLQTSLPALSEADTQELTQILRRMKGLALEAESELERQDEALDGVAAAVDRATLTIDKHNRRMKRLT.

Residues 20–42 (GRLWDSSGVPQRQKRPGPWRTQT) form a disordered region. 2 t-SNARE coiled-coil homology domains span residues 154-216 (VADA…LTEL) and 401-463 (TSLP…MKRL).

Belongs to the SVAP1 family. As to quaternary structure, forms a complex containing SNAP47, VAMP2 and STX1A. Associates with the BLOC-1 complex. Interacts with BLOC1S6.

It localises to the endomembrane system. It is found in the cytoplasm. The protein localises to the perinuclear region. Plays a role in intracellular membrane fusion. This Homo sapiens (Human) protein is Synaptosomal-associated protein 47 (SNAP47).